The sequence spans 412 residues: Na(+)-translocating NADH-quinone reductase subunit B (412 aa).

Helical transmembrane passes span 57–77 (MILVWFAVFPAMFWGMYNVGL), 127–147 (VFFLPIYITVFIVGGFWEVLF), and 163–183 (SILFALIVPPTLPLWQAALGI). Thr-236 is subject to FMN phosphoryl threonine. 5 helical membrane-spanning segments follow: residues 270–290 (GSIGEVSTLMILIGGAIILFG), 297–317 (IVAGVMIGMIATATLFNVIGS), 322–342 (MFSMPWYWHLVLGGFAFGMMF), 358–378 (WSYGVLIGVMCVLIRVVNPAY), and 381–401 (GMMLAILFANLFAPLFDYLVV).

It belongs to the NqrB/RnfD family. Composed of six subunits; NqrA, NqrB, NqrC, NqrD, NqrE and NqrF. FMN serves as cofactor.

It is found in the cell inner membrane. It carries out the reaction a ubiquinone + n Na(+)(in) + NADH + H(+) = a ubiquinol + n Na(+)(out) + NAD(+). Functionally, NQR complex catalyzes the reduction of ubiquinone-1 to ubiquinol by two successive reactions, coupled with the transport of Na(+) ions from the cytoplasm to the periplasm. NqrA to NqrE are probably involved in the second step, the conversion of ubisemiquinone to ubiquinol. The protein is Na(+)-translocating NADH-quinone reductase subunit B of Klebsiella pneumoniae (strain 342).